Here is a 486-residue protein sequence, read N- to C-terminus: Sensor protein PhoQ (486 aa).

At 1–16 (MKKLLHLFFPLSLRVR) the chain is on the cytoplasmic side. A helical transmembrane segment spans residues 17–37 (FLLATAAVVLVLSLAYGMVAL). The Periplasmic segment spans residues 38–194 (IGYSVSFDKT…LKSSYMVWSW (157 aa)). A divalent metal cation is bound by residues Asp151 and Asp152. A helical transmembrane segment spans residues 195–215 (FIYVLSANLLLVIPLLWVAAW). The 52-residue stretch at 215 to 266 (WWSLRPIEALAKEVRELEEHNRELLNPATTRELTSLVRNLNRLLKSERERYD) folds into the HAMP domain. Residues 216–486 (WSLRPIEALA…GRQHSTPKDE (271 aa)) lie on the Cytoplasmic side of the membrane. The Histidine kinase domain maps to 274 to 480 (DLTHSLKTPL…RMEVIFGRQH (207 aa)). His277 bears the Phosphohistidine; by autocatalysis mark. Asn385 is a Mg(2+) binding site. ATP is bound by residues 385–393 (NVLDNACKY), 415–420 (DDGPGI), and 434–446 (RVDT…GVGL). Mg(2+) is bound at residue Gln442.

As to quaternary structure, homodimer.

The protein localises to the cell inner membrane. It carries out the reaction ATP + protein L-histidine = ADP + protein N-phospho-L-histidine.. Its function is as follows. Member of the two-component regulatory system PhoP/PhoQ involved in virulence, adaptation to low Mg(2+) environments and the control of acid resistance genes. In low periplasmic Mg(2+), PhoQ functions as a membrane-associated protein kinase that undergoes autophosphorylation and subsequently transfers the phosphate to PhoP, resulting in the expression of PhoP-activated genes (PAG) and repression of PhoP-repressed genes (PRG). In high periplasmic Mg(2+), acts as a protein phosphatase that dephosphorylates phospho-PhoP, which results in the repression of PG and may lead to expression of some PRG. The protein is Sensor protein PhoQ (phoQ) of Escherichia coli O157:H7.